The sequence spans 282 residues: Complement component 1 Q subcomponent-binding protein, mitochondrial (282 aa).

A mitochondrion-targeting transit peptide spans 1–70 (MLPLLRCVPR…PRGPCACGCG (70 aa)). Residues 76-93 (TEGDKAFVDFLNDEIKEE) form a C1q binding region. An N6-acetyllysine modification is found at Lys-91. The interval 137–163 (NSIPPTFDGEEEPTQGQKVEEQEPELT) is disordered. Residues 168–213 (FVVEVIKNDDGKKALVLDCHYPEDEVGQEDEAESDIFSIREVSFQS) form an interaction with MAVS region. Tyr-188 is subject to Phosphotyrosine. Phosphoserine is present on residues Ser-201 and Ser-205.

This sequence belongs to the MAM33 family. As to quaternary structure, homotrimer; three monomers form a donut-shaped structure with an unusually asymmetric charge distribution on the surface. Interacts with CDK13, HRK, VTN, NFYB, ADRA1B, FOXC1, DDX21, DDX50, NCL, SRSF1 and SRSF9. Interacts with CD93; the association may represent a cell surface C1q receptor. Interacts with KRT1; the association represents a cell surface kininogen receptor. Interacts with CD209; the interaction is indicative for a C1q:C1QBP:CD209 signaling complex. Interacts with FBL and RRP1; the respective interactions with C1QBP are competitive. Probably associates with the mitoribosome. Interacts with MAVS; the interaction occurs upon viral transfection. Interacts with PPIF. Interacts with U2AF1L4. Interacts with PLEKHN1. Interacts with VGF-derived peptide TLQP-21. Interacts with MRE11 and RAD50; forming the MRC (MRE11-RAD50-C1QBP) complex that inhibits the activity of MRE11. In terms of assembly, (Microbial infection) Interacts with Rubella virus capsid protein; the interaction occurs in mitochondria. (Microbial infection) Interacts with L.monocytogenes InlB.

The protein resides in the mitochondrion matrix. Its subcellular location is the nucleus. It localises to the cell membrane. The protein localises to the secreted. It is found in the cytoplasm. The protein resides in the nucleolus. Multifunctional and multicompartmental protein involved in inflammation and infection processes, ribosome biogenesis, protein synthesis in mitochondria, regulation of apoptosis, transcriptional regulation and pre-mRNA splicing. At the cell surface is thought to act as an endothelial receptor for plasma proteins of the complement and kallikrein-kinin cascades. Putative receptor for C1q; specifically binds to the globular 'heads' of C1q thus inhibiting C1; may perform the receptor function through a complex with C1qR/CD93. In complex with cytokeratin-1/KRT1 is a high affinity receptor for kininogen-1/HMWK. Can also bind other plasma proteins, such as coagulation factor XII leading to its autoactivation. May function to bind initially fluid kininogen-1 to the cell membrane. The secreted form may enhance both extrinsic and intrinsic coagulation pathways. It is postulated that the cell surface form requires docking with transmembrane proteins for downstream signaling which might be specific for a cell-type or response. By acting as C1q receptor is involved in chemotaxis of immature dendritic cells and neutrophils and is proposed to signal through CD209/DC-SIGN on immature dendritic cells, through integrin alpha-4/beta-1 during trophoblast invasion of the decidua, and through integrin beta-1 during endothelial cell adhesion and spreading. Signaling involved in inhibition of innate immune response is implicating the PI3K-AKT/PKB pathway. Required for protein synthesis in mitochondria. In mitochondrial translation may be involved in formation of functional 55S mitoribosomes; the function seems to involve its RNA-binding activity. Acts as a RNA modification reader, which specifically recognizes and binds mitochondrial RNAs modified by C5-methylcytosine (m5C) in response to stress, and promotes recruitment of the mitochondrial degradosome complex, leading to their degradation. May be involved in the nucleolar ribosome maturation process; the function may involve the exchange of FBL for RRP1 in the association with pre-ribosome particles. Involved in regulation of RNA splicing by inhibiting the RNA-binding capacity of SRSF1 and its phosphorylation. Is required for the nuclear translocation of splicing factor U2AF1L4. Involved in regulation of CDKN2A- and HRK-mediated apoptosis. Stabilizes mitochondrial CDKN2A isoform smARF. May be involved in regulation of FOXC1 transcriptional activity and NFY/CCAAT-binding factor complex-mediated transcription. May play a role in antibacterial defense as it can bind to cell surface hyaluronan and inhibit Streptococcus pneumoniae hyaluronate lyase. May be involved in modulation of the immune response; ligation by HCV core protein is resulting in suppression of interleukin-12 production in monocyte-derived dendritic cells. Involved in regulation of antiviral response by inhibiting RIGI- and IFIH1-mediated signaling pathways probably involving its association with MAVS after viral infection. Acts as a regulator of DNA repair via homologous recombination by inhibiting the activity of MRE11: interacts with unphosphorylated MRE11 and RAD50 in absence of DNA damage, preventing formation and activity of the MRN complex. Following DNA damage, dissociates from phosphorylated MRE11, allowing formation of the MRN complex. Its function is as follows. (Microbial infection) During bacterial infection processes acts as an attachment site for microbial proteins, including Listeria monocytogenes internalin B (InlB). In Chlorocebus aethiops (Green monkey), this protein is Complement component 1 Q subcomponent-binding protein, mitochondrial (C1QBP).